We begin with the raw amino-acid sequence, 147 residues long: Truncated RecQ DNA helicase-like protein C212.06c (147 aa).

The Helicase C-terminal domain occupies 1-72 (MGVRLVVHYR…CVRSFLASEM (72 aa)). The tract at residues 100–147 (ETPKPAIATHSRYNASFSSSPPPQPGSSSGMSAMNTNTTSTTPVSGKT) is disordered. Residues 125 to 141 (GSSSGMSAMNTNTTSTT) are compositionally biased toward low complexity.

It belongs to the helicase family. RecQ subfamily.

In terms of biological role, truncated ATP-dependent 3'-5' DNA helicase. In Schizosaccharomyces pombe (strain 972 / ATCC 24843) (Fission yeast), this protein is Truncated RecQ DNA helicase-like protein C212.06c.